Reading from the N-terminus, the 60-residue chain is Bacteriochlorophyll c-binding protein (60 aa).

Residue M1 is modified to N-formylmethionine. Position 25 (H25) interacts with a bacteriochlorophyll c.

This sequence belongs to the BChl C/E-binding protein family.

Its subcellular location is the chlorosome. It localises to the chlorosome envelope. In terms of biological role, component of the photosynthetic apparatus. The light harvesting B740 complex binds bacteriochlorophyll c. The protein is Bacteriochlorophyll c-binding protein (csmA) of Pelodictyon luteolum.